A 104-amino-acid chain; its full sequence is Putative heat shock protein PS1 (104 aa).

2 N-linked (GlcNAc...) asparagine glycosylation sites follow: N11 and N18. An ATP-binding site is contributed by N18.

It belongs to the heat shock protein 90 family. In terms of assembly, homodimer.

Its subcellular location is the cytoplasm. In terms of biological role, putative molecular chaperone that may promote the maturation, structural maintenance and proper regulation of specific target proteins. The chain is Putative heat shock protein PS1 from Pinus strobus (Eastern white pine).